A 1249-amino-acid polypeptide reads, in one-letter code: Nuclear envelope pore membrane protein POM 121 (1249 aa).

The span at 1–10 shows a compositional bias: low complexity; the sequence is MSPAAAAAGA. Residues 1-27 are disordered; that stretch reads MSPAAAAAGAGERRRPIASVRDGRGRG. The segment at 1-34 is cisternal side; the sequence is MSPAAAAAGAGERRRPIASVRDGRGRGCGGPARA. The required for targeting to the nucleus and nuclear pore complex stretch occupies residues 1–285; it reads MSPAAAAAGA…APPDRRFSRS (285 aa). The segment covering 11–25 has biased composition (basic and acidic residues); sequence GERRRPIASVRDGRG. A helical membrane pass occupies residues 35-55; the sequence is VLLGLSLVGLLLYLVPAAAAL. A pore side region spans residues 56-1249; that stretch reads AWLTVGATAA…QARRQHTRKK (1194 aa). A Phosphoserine modification is found at serine 94. Disordered regions lie at residues 136-220, 319-530, 602-776, 959-986, and 1226-1249; these read LMGS…CGTL, KEKK…LGYS, KKMQ…PVFS, PLPSYPGANPQPAFGAAEGQPPGAAKPA, and IGAGSKTPGARQRLQARRQHTRKK. Positions 168 to 190 are enriched in pro residues; that stretch reads ARPAPRSPPPRSPPPRSPPPSPP. Phosphoserine is present on residues serine 345, serine 351, serine 371, serine 393, and serine 396. Residues 405 to 423 are compositionally biased toward polar residues; it reads IPSSSRNAITSSYSSTRGI. A compositionally biased stretch (low complexity) spans 432 to 445; the sequence is PSSSPFSSPASSRS. Basic and acidic residues-rich tracts occupy residues 450–462 and 472–486; these read RPAKKIREEELCH and ADRESQGEKAADTTP. Residues 491 to 502 show a composition bias toward polar residues; sequence NSNSQSTPGSSG. Residues 635 to 652 are compositionally biased toward low complexity; it reads PPLGLSQSGPPGLLPSPS. Residues 683–696 show a composition bias toward polar residues; it reads QAETATKPQATSAP. 2 stretches are compositionally biased toward low complexity: residues 712–726 and 749–770; these read SPSSPAAPAASSAPP and SVTATAPSSSSLPTTTSTTAPT. Residues 1239–1249 are compositionally biased toward basic residues; it reads LQARRQHTRKK.

Belongs to the POM121 family.

The protein resides in the nucleus. Its subcellular location is the nuclear pore complex. It is found in the nucleus membrane. The protein localises to the endoplasmic reticulum membrane. In terms of biological role, essential component of the nuclear pore complex (NPC). The repeat-containing domain may be involved in anchoring components of the pore complex to the pore membrane. When overexpressed in cells induces the formation of cytoplasmic annulate lamellae (AL). The polypeptide is Nuclear envelope pore membrane protein POM 121 (POM121) (Homo sapiens (Human)).